The sequence spans 273 residues: Large ribosomal subunit protein uL2 (273 aa).

The disordered stretch occupies residues Val228 to Lys273. Residues Lys254–Lys273 are compositionally biased toward basic residues.

This sequence belongs to the universal ribosomal protein uL2 family. As to quaternary structure, part of the 50S ribosomal subunit. Forms a bridge to the 30S subunit in the 70S ribosome.

Its function is as follows. One of the primary rRNA binding proteins. Required for association of the 30S and 50S subunits to form the 70S ribosome, for tRNA binding and peptide bond formation. It has been suggested to have peptidyltransferase activity; this is somewhat controversial. Makes several contacts with the 16S rRNA in the 70S ribosome. The chain is Large ribosomal subunit protein uL2 from Rickettsia peacockii (strain Rustic).